The chain runs to 417 residues: UDP-N-acetylglucosamine 1-carboxyvinyltransferase (417 aa).

Residue 22–23 (KN) participates in phosphoenolpyruvate binding. Arg93 serves as a coordination point for UDP-N-acetyl-alpha-D-glucosamine. Catalysis depends on Cys117, which acts as the Proton donor. A 2-(S-cysteinyl)pyruvic acid O-phosphothioketal modification is found at Cys117. Residues 122 to 126 (RPVDQ), Asp305, and Ile327 each bind UDP-N-acetyl-alpha-D-glucosamine.

It belongs to the EPSP synthase family. MurA subfamily.

The protein localises to the cytoplasm. It catalyses the reaction phosphoenolpyruvate + UDP-N-acetyl-alpha-D-glucosamine = UDP-N-acetyl-3-O-(1-carboxyvinyl)-alpha-D-glucosamine + phosphate. It participates in cell wall biogenesis; peptidoglycan biosynthesis. In terms of biological role, cell wall formation. Adds enolpyruvyl to UDP-N-acetylglucosamine. This is UDP-N-acetylglucosamine 1-carboxyvinyltransferase from Nitrosomonas eutropha (strain DSM 101675 / C91 / Nm57).